Consider the following 1004-residue polypeptide: MAGTDSPAAARFVYRCLLFAPAIVVGLLLPLTLPPIAAAQRHTASDNPSTYNIGGVLSNSESETYFHTIISHLNFDQQYVPRKVTYYDKTIRMDKNPIKTVFNVCDKLIENRVYAVVVSHEQTSGDLSPAAVSYTSGFYSIPVIGISSRDAAFSDKNIHVSFLRTVPPYYHQADVWLEMLSHFAYTKVIIIHSSDTDGRAILGRFQTTSQTYYDDVDVRATVELIVEFEPKLESFTEHLIDMKTAQSRVYLMYASTEDAQVIFRDAGEYNMTGEGHVWIVTEQALFANNTPDGVLGLQLEHAHSDKGHIRDSVYVLASAIKEMISNETIAEAPKDCGDSAVNWESGKRLFQYLKSRNITGETGQVAFDDNGDRIYAGYDVINIREHQKKHVVGKFSYDSMRAKMRMNINDSEIIWPGKQNRKPEGIMIPTHLKVLTIEEKPFVYVRRMGDDEFRCEPDERPCPLFNATDSTANEYCCRGYCIDLLIELSKRINFTYDLALSPDGQFGHYLLRNNTGAMTLRKEWTGLMGELVNERADMIVAPLTINPERAEYIEFSKPFKYQGITILEKKPSRSSTLVSFLQPFSNTLWILVMVSVHVVALVLYLLDRFSPFGRFKLSHSDSNEEKALNLSSAVWFAWGVLLNSGIGEGTPRSFSARVLGMVWAGFAMIIVASYTANLAAFLVLERPKTKLSGINDARLRNTMENLTCATVKGSSVDMYFRRQVELSNMYRTMEANNYATAEQAIQDVKKGKLMAFIWDSSRLEYEASKDCELVTAGELFGRSGYGVGLQKGSPWTDSVTLAILEFHESGFMEKLDKQWIFHGHVQQNCELFEKTPNTLGLKNMAGVFILVGVGIAGGVGLIIIEVIYKKHQVKKQKRLDIARHAADKWRGTIEKRKTIRASLAMQRQYNVGLNSTHPPGTISLAVDKRRYPRLGQRLGPERAWPGDAADVLRTRRPYELGKPGQSPKVMVATPAMLGRTRPQQNILPPRYSPGYTSDVSHLVV.

The signal sequence occupies residues 1–39 (MAGTDSPAAARFVYRCLLFAPAIVVGLLLPLTLPPIAAA). Residues 40 to 585 (QRHTASDNPS…TLVSFLQPFS (546 aa)) are Extracellular-facing. Residues Asn-270, Asn-326, Asn-357, Asn-409, Asn-466, Asn-493, and Asn-513 are each glycosylated (N-linked (GlcNAc...) asparagine). Glycine is bound by residues 542–544 (PLT) and Arg-549. Residues 586 to 606 (NTLWILVMVSVHVVALVLYLL) form a helical membrane-spanning segment. Over 607 to 663 (DRFSPFGRFKLSHSDSNEEKALNLSSAVWFAWGVLLNSGIGEGTPRSFSARVLGMVW) the chain is Cytoplasmic. The chain crosses the membrane as a helical span at residues 664–684 (AGFAMIIVASYTANLAAFLVL). Topologically, residues 685–843 (ERPKTKLSGI…KTPNTLGLKN (159 aa)) are extracellular. N-linked (GlcNAc...) asparagine glycosylation occurs at Asn-705. Glycine contacts are provided by Ser-715 and Asp-759. The helical transmembrane segment at 844–864 (MAGVFILVGVGIAGGVGLIII) threads the bilayer. Residues 865–1004 (EVIYKKHQVK…YTSDVSHLVV (140 aa)) are Cytoplasmic-facing. Residues 980–1004 (TRPQQNILPPRYSPGYTSDVSHLVV) form a disordered region. The span at 994 to 1004 (GYTSDVSHLVV) shows a compositional bias: polar residues.

This sequence belongs to the glutamate-gated ion channel (TC 1.A.10.1) family. Forms a heteromeric NMDA channel with Nmdar2.

Its subcellular location is the cell membrane. It is found in the postsynaptic cell membrane. The protein localises to the postsynaptic density. NMDA receptor subtype of glutamate-gated ion channels with high calcium permeability and voltage-dependent sensitivity to magnesium. Mediated by glycine. This protein plays a key role in synaptic plasticity, synaptogenesis, excitotoxicity, memory acquisition and learning. It mediates neuronal functions in glutamate neurotransmission. Is involved in the cell surface targeting of NMDA receptors. Plays a role in associative learning and in long-term memory consolidation. The polypeptide is Glutamate [NMDA] receptor subunit 1 (Drosophila pseudoobscura pseudoobscura (Fruit fly)).